The chain runs to 132 residues: NADH-quinone oxidoreductase subunit A 2 (132 aa).

Helical transmembrane passes span 10 to 30 (WALL…LGLG), 66 to 86 (LVAM…LWAV), and 93 to 113 (WAGF…LFYL).

The protein belongs to the complex I subunit 3 family. As to quaternary structure, NDH-1 is composed of 13 different subunits. Subunits NuoA, H, J, K, L, M, N constitute the membrane sector of the complex.

It is found in the cell inner membrane. It catalyses the reaction a quinone + NADH + 5 H(+)(in) = a quinol + NAD(+) + 4 H(+)(out). Its function is as follows. NDH-1 shuttles electrons from NADH, via FMN and iron-sulfur (Fe-S) centers, to quinones in the respiratory chain. The immediate electron acceptor for the enzyme in this species is believed to be ubiquinone. Couples the redox reaction to proton translocation (for every two electrons transferred, four hydrogen ions are translocated across the cytoplasmic membrane), and thus conserves the redox energy in a proton gradient. This Pseudomonas aeruginosa (strain UCBPP-PA14) protein is NADH-quinone oxidoreductase subunit A 2.